The primary structure comprises 172 residues: Transcriptional repressor NrdR (172 aa).

A zinc finger lies at 3 to 34 (CPFCRHPDSRVVDSRTTDDGTSIRRRRQCPDC). Residues 46 to 136 (LMVIKRSGVT…VYRAFDSLED (91 aa)) enclose the ATP-cone domain. The disordered stretch occupies residues 152–172 (ERSGGGTCGTGTVPVPAGTAD). A compositionally biased stretch (low complexity) spans 161–172 (TGTVPVPAGTAD).

The protein belongs to the NrdR family. It depends on Zn(2+) as a cofactor.

Functionally, negatively regulates transcription of bacterial ribonucleotide reductase nrd genes and operons by binding to NrdR-boxes. This chain is Transcriptional repressor NrdR, found in Streptomyces clavuligerus.